A 1076-amino-acid polypeptide reads, in one-letter code: Carbamoyl phosphate synthase large chain (1076 aa).

Residues 1–402 are carboxyphosphate synthetic domain; it reads MPKREDIRKI…ALQKAIRSLE (402 aa). Residues R129, R169, G175, G176, E208, V210, E215, G241, V242, H243, Q285, and E299 each contribute to the ATP site. Residues 133–328 form the ATP-grasp 1 domain; the sequence is KEAMRKIGLD…IAKIAAKLAV (196 aa). The Mg(2+) site is built by Q285, E299, and N301. 3 residues coordinate Mn(2+): Q285, E299, and N301. The oligomerization domain stretch occupies residues 403–555; sequence IGRYGLGCDG…YSTYEDENEA (153 aa). The carbamoyl phosphate synthetic domain stretch occupies residues 556–939; sequence LRSERKKVMI…YKAELAAGMK (384 aa). In terms of domain architecture, ATP-grasp 2 spans 680-871; it reads AELLERLNIP…LAKIAAKLMM (192 aa). Positions 716, 755, 757, 762, 787, 788, 789, 790, 830, and 842 each coordinate ATP. 3 residues coordinate Mg(2+): Q830, E842, and N844. Residues Q830, E842, and N844 each coordinate Mn(2+). Residues 938–1076 form the MGS-like domain; the sequence is MKLPLKGTVF…KSIQEYHEES (139 aa). An allosteric domain region spans residues 940–1076; the sequence is LPLKGTVFIS…KSIQEYHEES (137 aa).

The protein belongs to the CarB family. In terms of assembly, composed of two chains; the small (or glutamine) chain promotes the hydrolysis of glutamine to ammonia, which is used by the large (or ammonia) chain to synthesize carbamoyl phosphate. Tetramer of heterodimers (alpha,beta)4. Mg(2+) serves as cofactor. Mn(2+) is required as a cofactor.

The enzyme catalyses hydrogencarbonate + L-glutamine + 2 ATP + H2O = carbamoyl phosphate + L-glutamate + 2 ADP + phosphate + 2 H(+). It catalyses the reaction hydrogencarbonate + NH4(+) + 2 ATP = carbamoyl phosphate + 2 ADP + phosphate + 2 H(+). Its pathway is amino-acid biosynthesis; L-arginine biosynthesis; carbamoyl phosphate from bicarbonate: step 1/1. It participates in pyrimidine metabolism; UMP biosynthesis via de novo pathway; (S)-dihydroorotate from bicarbonate: step 1/3. Its function is as follows. Large subunit of the glutamine-dependent carbamoyl phosphate synthetase (CPSase). CPSase catalyzes the formation of carbamoyl phosphate from the ammonia moiety of glutamine, carbonate, and phosphate donated by ATP, constituting the first step of 2 biosynthetic pathways, one leading to arginine and/or urea and the other to pyrimidine nucleotides. The large subunit (synthetase) binds the substrates ammonia (free or transferred from glutamine from the small subunit), hydrogencarbonate and ATP and carries out an ATP-coupled ligase reaction, activating hydrogencarbonate by forming carboxy phosphate which reacts with ammonia to form carbamoyl phosphate. In Archaeoglobus fulgidus (strain ATCC 49558 / DSM 4304 / JCM 9628 / NBRC 100126 / VC-16), this protein is Carbamoyl phosphate synthase large chain.